Reading from the N-terminus, the 400-residue chain is MPAIKIKDNIFSVGVLNPSLRIFDIIMKTEYGTSYNAYLIKGKKNVLIDTVHGRFFDEYLENIKSVIDPSSIDYVIMNHCEPDHSGSLARLYEVAPQIKVIASNAGKIYLKNITNKETLDVKAVKTNDTLDIGNGKVLKFAIAPFLHWPDSMFTILEEDKIAFTCDFLGCHFCEPRMFDTKITYMPKYEKSFKEYYDAIFSPFKPYVVKGLDILDALDLDFIATSHGPILTREGLLAASKQKYRDLSSEIQSTTKYIPIFYCSAYGNTEILANEIASGIKSVLNDANIEMLDIINYDYSDLKEKINICDAFMLGTPTINKDALFPIWELIGGIDAVNCKNKPASAFGSFGWSGEAIPFVISRLKELKLKVFQDGFTCLFVPSEDDIKKAFKFGEDFAKSI.

The zinc metallo-hydrolase stretch occupies residues 32–216 (GTSYNAYLIK…VVKGLDILDA (185 aa)). 6 residues coordinate Fe cation: His79, Glu81, Asp83, His147, Asp166, and His226. One can recognise a Flavodoxin-like domain in the interval 257–397 (IPIFYCSAYG…KAFKFGEDFA (141 aa)). Residues 263–267 (SAYGN) and 345–372 (AFGS…KVFQ) contribute to the FMN site.

It in the N-terminal section; belongs to the zinc metallo-hydrolase group 3 family. As to quaternary structure, homotetramer. FMN is required as a cofactor. It depends on Fe cation as a cofactor.

The enzyme catalyses 2 NADH + O2 + 2 H(+) = 2 NAD(+) + 2 H2O. In terms of biological role, catalyzes the four-electron reduction of molecular oxygen to water. In fact, functions as the terminal component of an NADH oxidase (NADH:O(2) oxidoreductase) when using NADH:rubredoxin oxidoreductase (NROR) and rubredoxin (Rd) as electron transport intermediaries between NADH and FDP. Is thus able to reductively scavenge intracellular dioxygen and is part of an oxidative stress defense system in C.acetobutylicum, an obligate anaerobic bacterium. Can also serve as the terminal component of an NADH:nitric oxide oxidoreductase (NOR) with a catalytic efficiency comparable to that of its NADH oxidase activity, and therefore might have an in vivo role in scavenging nitric oxide. This Clostridium acetobutylicum (strain ATCC 824 / DSM 792 / JCM 1419 / IAM 19013 / LMG 5710 / NBRC 13948 / NRRL B-527 / VKM B-1787 / 2291 / W) protein is Flavo-diiron protein FprA2 (fprA2).